The primary structure comprises 230 residues: MANVSKRIKALRAKVDRNKVYPVTEALALVKETATAKFDESVDAVINLGIDARKSDQLVRGALVLPHGTGKTKRVAVFAQGAAAEAAKAAGADIVGFEDLAEQVKGGMLDFDVAIATPDAMRIVGALGQVLGPRGLMPNPKVGTVTPDVATAVKNAKAGQVQYRTDKGGIVHCTIGRASFEVDALKENLAALVDALNKAKPASSKGVYLKKVSVSSTMGAGVRVDQSNLA.

This sequence belongs to the universal ribosomal protein uL1 family. Part of the 50S ribosomal subunit.

In terms of biological role, binds directly to 23S rRNA. The L1 stalk is quite mobile in the ribosome, and is involved in E site tRNA release. Its function is as follows. Protein L1 is also a translational repressor protein, it controls the translation of the L11 operon by binding to its mRNA. The sequence is that of Large ribosomal subunit protein uL1 from Methylobacillus flagellatus (strain ATCC 51484 / DSM 6875 / VKM B-1610 / KT).